A 102-amino-acid chain; its full sequence is Cytochrome c oxidase subunit 6a, mitochondrial (102 aa).

The transit peptide at 1–36 (MATAIVRSALSRAVTRAAPKTSVAPKRNFSSSAGHD) directs the protein to the mitochondrion.

It belongs to the cytochrome c oxidase subunit 6A (TC 3.D.4.11) family.

Its subcellular location is the mitochondrion inner membrane. Functionally, this protein is one of the nuclear-coded polypeptide chains of cytochrome c oxidase, the terminal oxidase in mitochondrial electron transport. The protein is Cytochrome c oxidase subunit 6a, mitochondrial (COX6A) of Arabidopsis thaliana (Mouse-ear cress).